A 173-amino-acid chain; its full sequence is CDP-archaeol synthase (173 aa).

5 helical membrane-spanning segments follow: residues 15–35 (GLWF…FGGG), 59–79 (GFIV…LVVG), 84–104 (AGDG…GSFV), 118–138 (VLDQ…VYGW), and 142–162 (GWVL…TNVI).

It belongs to the CDP-archaeol synthase family. The cofactor is Mg(2+).

The protein resides in the cell membrane. The enzyme catalyses 2,3-bis-O-(geranylgeranyl)-sn-glycerol 1-phosphate + CTP + H(+) = CDP-2,3-bis-O-(geranylgeranyl)-sn-glycerol + diphosphate. It functions in the pathway membrane lipid metabolism; glycerophospholipid metabolism. In terms of biological role, catalyzes the formation of CDP-2,3-bis-(O-geranylgeranyl)-sn-glycerol (CDP-archaeol) from 2,3-bis-(O-geranylgeranyl)-sn-glycerol 1-phosphate (DGGGP) and CTP. This reaction is the third ether-bond-formation step in the biosynthesis of archaeal membrane lipids. This is CDP-archaeol synthase from Methanopyrus kandleri (strain AV19 / DSM 6324 / JCM 9639 / NBRC 100938).